Reading from the N-terminus, the 318-residue chain is Pantothenate kinase (318 aa).

Residue 96–103 (GSVAVGKS) coordinates ATP.

This sequence belongs to the prokaryotic pantothenate kinase family.

Its subcellular location is the cytoplasm. The catalysed reaction is (R)-pantothenate + ATP = (R)-4'-phosphopantothenate + ADP + H(+). It functions in the pathway cofactor biosynthesis; coenzyme A biosynthesis; CoA from (R)-pantothenate: step 1/5. This chain is Pantothenate kinase, found in Coxiella burnetii (strain RSA 493 / Nine Mile phase I).